A 239-amino-acid polypeptide reads, in one-letter code: 7-cyano-7-deazaguanine synthase (239 aa).

13–23 (FSGGQDSTTCL) contributes to the ATP binding site. 4 residues coordinate Zn(2+): Cys201, Cys216, Cys219, and Cys222.

Belongs to the QueC family. The cofactor is Zn(2+).

It catalyses the reaction 7-carboxy-7-deazaguanine + NH4(+) + ATP = 7-cyano-7-deazaguanine + ADP + phosphate + H2O + H(+). It participates in purine metabolism; 7-cyano-7-deazaguanine biosynthesis. In terms of biological role, catalyzes the ATP-dependent conversion of 7-carboxy-7-deazaguanine (CDG) to 7-cyano-7-deazaguanine (preQ(0)). The polypeptide is 7-cyano-7-deazaguanine synthase (Bradyrhizobium sp. (strain BTAi1 / ATCC BAA-1182)).